The primary structure comprises 266 residues: CD82 antigen (266 aa).

The Cytoplasmic portion of the chain corresponds to 1 to 11; sequence MGAGCVKVTKY. The S-palmitoyl cysteine moiety is linked to residue C5. A helical transmembrane segment spans residues 12 to 32; it reads FLFLFNLLFFILGAVILGFGV. Residues 33-53 lie on the Extracellular side of the membrane; it reads WILADKNSFISVLQTSSSSLQ. A helical membrane pass occupies residues 54 to 72; it reads VGAYVFIGVGAITIVMGFL. The Cytoplasmic segment spans residues 73–83; that stretch reads GCIGAVNEVRC. The S-palmitoyl cysteine moiety is linked to residue C74. The chain crosses the membrane as a helical span at residues 84-110; the sequence is LLGLYFVFLLLILIAQVTVGVLFYFNA. At 111–227 the chain is on the extracellular side; it reads DKLKKEMGNT…KAQAWLQENF (117 aa). Residues N127, N131, N157, and N197 are each glycosylated (N-linked (GlcNAc...) asparagine). The chain crosses the membrane as a helical span at residues 228 to 249; it reads GILLGVCAGVAVIELLGLFLSI. Residues 250-266 are Cytoplasmic-facing; the sequence is CLCRYIHSEDYSKVPKY.

Belongs to the tetraspanin (TM4SF) family. Forms homooligomers. Interacts directly with IGSF8. Interacts with EGFR. Interacts with VEGFA and PDGFA. Interacts with ITGA4. Interacts with ITGA6; this interaction reduces ITGA6 cell surface expression. Interacts with ITGB1. Interacts with TLR4; this interaction inhibits TLR4-mediated signaling pathway. Interacts with TLR9. Interacts with PLAUR. Post-translationally, palmitoylated. Palmitoylation contributes to oligomerization and surface expression. As to expression, highest expression in the spleen and the kidney. Low expression in skeletal muscle and in the heart.

It localises to the cell membrane. The protein localises to the cytoplasmic vesicle. Its subcellular location is the phagosome. Functionally, structural component of specialized membrane microdomains known as tetraspanin-enriched microdomains (TERMs), which act as platforms for receptor clustering and signaling. Participates thereby in diverse biological functions such as cell signal transduction, adhesion, migration and protein trafficking. Acts as a attenuator of EGF signaling, facilitating ligand-induced endocytosis of the receptor and its subsequent desensitization. Mechanistically, modulates ligand-induced ubiquitination and trafficking of EGFR via E3 ligase CBL phosphorylation by PKC. Increases cell-matrix adhesion by regulating the membrane organization of integrin alpha4/ITA4. Modulates adhesion and suppresses cell migration through other integrins such as the alpha6/ITGA6 and beta1/ITGB1. Decreases cell-associated plasminogen activation by interfering with the interaction between urokinase-type plasminogen activator/PLAU and its receptor PLAUR. Associates with CD4 or CD8 and delivers costimulatory signals for the TCR/CD3 pathway. Plays a role in the restrains phagocyte migration but supports macrophage activation. Plays a role in TLR9 trafficking to acidified CpG-containing compartments by controlling interaction between TLR9 and VAMP3 and subsequent myddosome assembly. Inhibits LPS-induced inflammatory response by preventing binding of LPS to TLR4 on the cell surface. Plays a role in the activation of macrophages into anti-inflammatory phenotypes. Independently of Toll-like receptor (TLR) signaling, is recruited to pathogen-containing phagosomes prior to fusion with lysosomes and participates in antigen presentation. Also acts to control angiogenesis and switch angiogenic milieu to quiescent state by binding and sequestering VEGFA and PDGFA to inhibit the signaling they trigger via their respective cell surface receptor. This is CD82 antigen (Cd82) from Mus musculus (Mouse).